The primary structure comprises 1090 residues: UPF0507 protein SCY_4172 (1090 aa).

In terms of domain architecture, VPS9 spans Phe-289–Asn-436.

The protein belongs to the UPF0507 family.

The polypeptide is UPF0507 protein SCY_4172 (Saccharomyces cerevisiae (strain YJM789) (Baker's yeast)).